Reading from the N-terminus, the 141-residue chain is Large ribosomal subunit protein uL22c (141 aa).

Belongs to the universal ribosomal protein uL22 family. Part of the 50S ribosomal subunit.

Its subcellular location is the plastid. It is found in the chloroplast. Functionally, this protein binds specifically to 23S rRNA. The globular domain of the protein is located near the polypeptide exit tunnel on the outside of the subunit, while an extended beta-hairpin is found that lines the wall of the exit tunnel in the center of the 70S ribosome. The polypeptide is Large ribosomal subunit protein uL22c (rpl22) (Chloranthus spicatus (Chulantree)).